Consider the following 385-residue polypeptide: Glucans biosynthesis protein C (385 aa).

The next 10 helical transmembrane spans lie at 17 to 37 (AWLM…SHTW), 60 to 80 (MLVF…RYPL), 91 to 111 (VGIP…IMLQ), 137 to 157 (ISHL…VWIF), 173 to 193 (KFSM…YAVI), 212 to 232 (FIVM…LAFI), 239 to 259 (LFTT…VAYL), 274 to 294 (TESV…FSFG), 311 to 331 (ASLF…AYIT), and 338 to 358 (WLGF…LYEI).

It belongs to the acyltransferase 3 family. OpgC subfamily.

It localises to the cell membrane. It participates in glycan metabolism; osmoregulated periplasmic glucan (OPG) biosynthesis. In terms of biological role, necessary for the succinyl substitution of periplasmic glucans. Could catalyze the transfer of succinyl residues from the cytoplasmic side of the membrane to the nascent glucan backbones on the periplasmic side of the membrane. This chain is Glucans biosynthesis protein C, found in Shigella boydii serotype 4 (strain Sb227).